A 313-amino-acid polypeptide reads, in one-letter code: Bifunctional pinoresinol-lariciresinol reductase 1 (313 aa).

NADP(+)-binding positions include 11–17 (GGTGYIG), Arg-36, and Lys-45. The Proton acceptor role is filled by Lys-138. Arg-142 serves as a coordination point for NADP(+). His-271 contacts substrate.

The protein belongs to the NmrA-type oxidoreductase family. Isoflavone reductase subfamily. As to quaternary structure, dimer.

It catalyses the reaction (+)-lariciresinol + NADP(+) = (+)-pinoresinol + NADPH + H(+). It carries out the reaction (-)-lariciresinol + NADP(+) = (-)-pinoresinol + NADPH + H(+). The catalysed reaction is (+)-secoisolariciresinol + NADP(+) = (-)-lariciresinol + NADPH + H(+). Its function is as follows. Reductase involved in lignan biosynthesis. Catalyzes the enantioselective sequential conversion of (-)-pinoresinol into (-)-lariciresinol and of (-)-lariciresinol into (+)-secoisolariciresinol. Can also convert with a lower efficiency (+)-pinoresinol into (+)-lariciresinol, but not (+)-lariciresinol into (-)-secoisolariciresinol. Abstracts the 4R-hydride from the NADPH cofactor during catalysis. This chain is Bifunctional pinoresinol-lariciresinol reductase 1 (PLR_Tp1), found in Thuja plicata (Western red-cedar).